The primary structure comprises 320 residues: MIFSTLEHILIHISFSVVSIVITIYFLTLLVDEIVGLYDSSDKGMIVTFFCITGLLAARWIYSGHFPLSNLYESLIFLSWSFSIIHMVCYFNKKHKNNLNAITGPSAILTQGFATSGLLNKMSQSVILVPALQSQWLMMHVSMMVLGYAALLCGSLLSVALLVITFRKVIRIFGKSNNFLNESFSFGKIQYMNERSNILLNTSFLSSRNYYRYQLIQQLDHWSYRIISLGFIFLTIGILSGAVWANEAWGSYWNWDPKETWAFITWTIFAIYLHIRTNINLGGINSAIVASMGFLIIWICYFGVNLLGIGLHSYGSFTLT.

The next 8 helical transmembrane spans lie at 9–29, 44–64, 71–91, 99–119, 144–164, 226–246, 261–281, and 287–307; these read ILIH…FLTL, GMIV…IYSG, LYES…VCYF, LNAI…SGLL, MVLG…LLVI, IISL…VWAN, WAFI…NINL, and AIVA…VNLL.

Belongs to the CcmF/CycK/Ccl1/NrfE/CcsA family. In terms of assembly, may interact with Ccs1.

It localises to the plastid. It is found in the chloroplast thylakoid membrane. In terms of biological role, required during biogenesis of c-type cytochromes (cytochrome c6 and cytochrome f) at the step of heme attachment. In Carica papaya (Papaya), this protein is Cytochrome c biogenesis protein CcsA.